The primary structure comprises 465 residues: MFIYDTKSKQKVPFEPLVQNKANIYVCGPTVYDDAHLGHARSAIAFDLLRRTLELSGYEVVLVRNFTDIDDKIINKAFKENKSIQELSSIYIESYTRDLNALNVKKPSLEPKASEYLDAMVRMIETLLEKNFAYQVSNGDIYLDTSKDKDYGSLSMHNSSVEFSRIGLVQEKRLEQDFVLWKSYKGDNDVGFDSPLGKGRPGWHIECSSMVFETLALANAPYQIDIHAGGADLLFPHHENEACQTRCAFGVELAKYWMHNGFVNINNEKMSKSLGNSFFIKDALKNYDGEILRNYLLGVHYRSVLNFNEEDLLVSKKRLDKIYRLKQRVLGTLGGINPNFKKEILECMQDDLNVSKALSVLESMLSSTNEKLDQNPKNKALKGEILANLKFIEELLGIGVKDPSAYFQLGVSESEKQEIENKIEERKRAKEQKDFLKADSIREELLNHKIALMDTPQGTIWEKLF.

A Zn(2+)-binding site is contributed by cysteine 27. The 'HIGH' region signature appears at 29 to 39; sequence PTVYDDAHLGH. Zn(2+)-binding residues include cysteine 207, histidine 237, and glutamate 241. The 'KMSKS' region motif lies at 269 to 273; that stretch reads KMSKS. Position 272 (lysine 272) interacts with ATP.

The protein belongs to the class-I aminoacyl-tRNA synthetase family. As to quaternary structure, monomer. It depends on Zn(2+) as a cofactor.

The protein localises to the cytoplasm. The enzyme catalyses tRNA(Cys) + L-cysteine + ATP = L-cysteinyl-tRNA(Cys) + AMP + diphosphate. This Helicobacter pylori (strain P12) protein is Cysteine--tRNA ligase.